We begin with the raw amino-acid sequence, 298 residues long: Glutamate/glycine mitochondrial carrier ymc1 (298 aa).

Solcar repeat units follow at residues 14-98 (TKDF…CKRF), 106-193 (VTMP…LVKN), and 206-294 (TPGW…VSQH). 6 helical membrane passes run 17–37 (FLAG…FDCV), 67–87 (LAAF…CVSI), 112–132 (YVSG…VEHV), 172–192 (TAAR…ALVK), 212–232 (CVFG…FDIV), and 266–287 (FYRG…TFYV).

The protein belongs to the mitochondrial carrier (TC 2.A.29) family.

It is found in the mitochondrion inner membrane. In terms of biological role, acts as a glutamate and glycine mitochondrial transmembrane transporter. This is Glutamate/glycine mitochondrial carrier ymc1 (ymc1) from Schizosaccharomyces pombe (strain 972 / ATCC 24843) (Fission yeast).